A 132-amino-acid chain; its full sequence is Glycine cleavage system H protein (132 aa).

The region spanning 24–106 (TVRVGITDFA…YGAGWLLDVQ (83 aa)) is the Lipoyl-binding domain. Lys-65 is subject to N6-lipoyllysine.

This sequence belongs to the GcvH family. The glycine cleavage system is composed of four proteins: P, T, L and H. It depends on (R)-lipoate as a cofactor.

Its function is as follows. The glycine cleavage system catalyzes the degradation of glycine. The H protein shuttles the methylamine group of glycine from the P protein to the T protein. This is Glycine cleavage system H protein from Mycobacterium avium (strain 104).